A 194-amino-acid polypeptide reads, in one-letter code: Protein GrpE 2 (194 aa).

Residues 1-17 (MNDIDKHKKETQTESKN) show a composition bias toward basic and acidic residues. Residues 1 to 29 (MNDIDKHKKETQTESKNDLNNTTITQNNV) are disordered. A compositionally biased stretch (polar residues) spans 18–29 (DLNNTTITQNNV).

This sequence belongs to the GrpE family. In terms of assembly, homodimer.

It is found in the cytoplasm. Participates actively in the response to hyperosmotic and heat shock by preventing the aggregation of stress-denatured proteins, in association with DnaK and GrpE. It is the nucleotide exchange factor for DnaK and may function as a thermosensor. Unfolded proteins bind initially to DnaJ; upon interaction with the DnaJ-bound protein, DnaK hydrolyzes its bound ATP, resulting in the formation of a stable complex. GrpE releases ADP from DnaK; ATP binding to DnaK triggers the release of the substrate protein, thus completing the reaction cycle. Several rounds of ATP-dependent interactions between DnaJ, DnaK and GrpE are required for fully efficient folding. The sequence is that of Protein GrpE 2 from Buchnera aphidicola subsp. Baizongia pistaciae (strain Bp).